A 199-amino-acid chain; its full sequence is Superoxide dismutase [Mn/Fe] 1 (199 aa).

His27, His81, Asp161, and His165 together coordinate Fe(3+). Positions 27, 81, 161, and 165 each coordinate Mn(2+).

It belongs to the iron/manganese superoxide dismutase family. In terms of assembly, homodimer. Can also form a heterodimer with SodM. The cofactor is Mn(2+). Fe(3+) serves as cofactor.

The catalysed reaction is 2 superoxide + 2 H(+) = H2O2 + O2. Its function is as follows. Destroys superoxide anion radicals which are normally produced within the cells and which are toxic to biological systems. Catalyzes the dismutation of superoxide anion radicals into O2 and H2O2 by successive reduction and oxidation of the transition metal ion at the active site. This Staphylococcus aureus (strain USA300) protein is Superoxide dismutase [Mn/Fe] 1 (sodA).